The sequence spans 402 residues: Speedy protein E2 (402 aa).

Residues 1 to 89 (MDRTETRFRK…EEPEKELAPE (89 aa)) are disordered. The span at 16 to 39 (GKITTSRQPHPQNEQSPQRSTSGY) shows a compositional bias: polar residues. Over residues 76 to 89 (DESEEEPEKELAPE) the composition is skewed to acidic residues.

This sequence belongs to the Speedy/Ringo family.

The protein is Speedy protein E2 (SPDYE2) of Homo sapiens (Human).